The sequence spans 547 residues: Chaperonin GroEL (547 aa).

ATP is bound by residues 30 to 33 (TLGP), Lys51, 87 to 91 (DGTTT), Gly415, and Asp495. Residues 526-547 (QDATPTASPDMGGMGGMGGGMM) are disordered. The span at 537–547 (GGMGGMGGGMM) shows a compositional bias: gly residues.

Belongs to the chaperonin (HSP60) family. In terms of assembly, forms a cylinder of 14 subunits composed of two heptameric rings stacked back-to-back. Interacts with the co-chaperonin GroES.

It localises to the cytoplasm. It carries out the reaction ATP + H2O + a folded polypeptide = ADP + phosphate + an unfolded polypeptide.. Functionally, together with its co-chaperonin GroES, plays an essential role in assisting protein folding. The GroEL-GroES system forms a nano-cage that allows encapsulation of the non-native substrate proteins and provides a physical environment optimized to promote and accelerate protein folding. The sequence is that of Chaperonin GroEL from Vesicomyosocius okutanii subsp. Calyptogena okutanii (strain HA).